A 135-amino-acid chain; its full sequence is MMLSPDQAADSDHPSSAHSDPESLGGTDTKVLGSVSDLEPVEEAEGDGKGGSRAALYPHPQQLSREEKRRRRRATAKYRSAHATRERIRVEAFNLAFAELRKLLPTLPPDKKLSKIEILRLAICYISYLNHVLDV.

A disordered region spans residues 1–80 (MMLSPDQAAD…RRRATAKYRS (80 aa)). Residues 10–21 (DSDHPSSAHSDP) are compositionally biased toward basic and acidic residues. Over residues 68–80 (KRRRRRATAKYRS) the composition is skewed to basic residues. The bHLH domain maps to 77–129 (KYRSAHATRERIRVEAFNLAFAELRKLLPTLPPDKKLSKIEILRLAICYISYL).

In terms of assembly, homodimer. Interacts and may form heterodimers with STAT3.

The protein resides in the nucleus. Transcription factor which binds the E box motif 5'-CA[TC][AG]TG-3'. Involved in regulating energy expenditure, body mass, voluntary physical activity, mating behavior and reproductive longevity, acting through the hypothalamic-pituitary-gonadal axis. Acts as a transcriptional activator of target genes, including NDN, PCSK1, MC4R. Is also a transcriptional activator of KISS1. May act centrally to regulate function of both white and brown adipose tissue. Together with NHLH1, required to maintain migration and survival of cells in the anterior extramural migration stream (aes), which forms the precerebellar nuclei. Also, in concert with NHLH1, may determine fate of gonadotropin releasing hormone-1 (GnRH-1) neurons. The sequence is that of Helix-loop-helix protein 2 (NHLH2) from Homo sapiens (Human).